The sequence spans 236 residues: Ribonuclease HII (236 aa).

Residues 21–214 enclose the RNase H type-2 domain; sequence RTVAGVDEVG…LDALPRWQHL (194 aa). 3 residues coordinate a divalent metal cation: Asp-27, Glu-28, and Asp-119.

This sequence belongs to the RNase HII family. Requires Mn(2+) as cofactor. Mg(2+) is required as a cofactor.

Its subcellular location is the cytoplasm. It carries out the reaction Endonucleolytic cleavage to 5'-phosphomonoester.. Its function is as follows. Endonuclease that specifically degrades the RNA of RNA-DNA hybrids. This chain is Ribonuclease HII, found in Streptomyces griseus subsp. griseus (strain JCM 4626 / CBS 651.72 / NBRC 13350 / KCC S-0626 / ISP 5235).